Reading from the N-terminus, the 355-residue chain is UDP-N-acetylglucosamine--N-acetylmuramyl-(pentapeptide) pyrophosphoryl-undecaprenol N-acetylglucosamine transferase (355 aa).

UDP-N-acetyl-alpha-D-glucosamine is bound by residues 14–16 (TGG), N126, R162, S190, I243, 262–267 (ALTVSE), and Q287.

It belongs to the glycosyltransferase 28 family. MurG subfamily.

The protein resides in the cell inner membrane. It carries out the reaction di-trans,octa-cis-undecaprenyl diphospho-N-acetyl-alpha-D-muramoyl-L-alanyl-D-glutamyl-meso-2,6-diaminopimeloyl-D-alanyl-D-alanine + UDP-N-acetyl-alpha-D-glucosamine = di-trans,octa-cis-undecaprenyl diphospho-[N-acetyl-alpha-D-glucosaminyl-(1-&gt;4)]-N-acetyl-alpha-D-muramoyl-L-alanyl-D-glutamyl-meso-2,6-diaminopimeloyl-D-alanyl-D-alanine + UDP + H(+). Its pathway is cell wall biogenesis; peptidoglycan biosynthesis. Functionally, cell wall formation. Catalyzes the transfer of a GlcNAc subunit on undecaprenyl-pyrophosphoryl-MurNAc-pentapeptide (lipid intermediate I) to form undecaprenyl-pyrophosphoryl-MurNAc-(pentapeptide)GlcNAc (lipid intermediate II). The polypeptide is UDP-N-acetylglucosamine--N-acetylmuramyl-(pentapeptide) pyrophosphoryl-undecaprenol N-acetylglucosamine transferase (Vibrio vulnificus (strain CMCP6)).